A 119-amino-acid chain; its full sequence is Ribonuclease P protein component (119 aa).

This sequence belongs to the RnpA family. In terms of assembly, consists of a catalytic RNA component (M1 or rnpB) and a protein subunit.

The catalysed reaction is Endonucleolytic cleavage of RNA, removing 5'-extranucleotides from tRNA precursor.. In terms of biological role, RNaseP catalyzes the removal of the 5'-leader sequence from pre-tRNA to produce the mature 5'-terminus. It can also cleave other RNA substrates such as 4.5S RNA. The protein component plays an auxiliary but essential role in vivo by binding to the 5'-leader sequence and broadening the substrate specificity of the ribozyme. The protein is Ribonuclease P protein component of Streptococcus equi subsp. equi (strain 4047).